Consider the following 199-residue polypeptide: V-type ATP synthase subunit E (199 aa).

It belongs to the V-ATPase E subunit family.

Its function is as follows. Produces ATP from ADP in the presence of a proton gradient across the membrane. This Borrelia garinii subsp. bavariensis (strain ATCC BAA-2496 / DSM 23469 / PBi) (Borreliella bavariensis) protein is V-type ATP synthase subunit E.